Reading from the N-terminus, the 251-residue chain is HTH-type transcriptional regulator UlaR (251 aa).

Residues 3–58 enclose the HTH deoR-type domain; that stretch reads EAQRHQILLDMLAQLGFVTVENVIERLGISPATARRDINKLDESGKLKKVRNGAEA. Residues 20–39 constitute a DNA-binding region (H-T-H motif); that stretch reads VTVENVIERLGISPATARRD.

Its subcellular location is the cytoplasm. Its function is as follows. Represses ulaG and the ulaABCDEF operon. The chain is HTH-type transcriptional regulator UlaR from Salmonella agona (strain SL483).